We begin with the raw amino-acid sequence, 165 residues long: Large ribosomal subunit protein uL10 (165 aa).

This sequence belongs to the universal ribosomal protein uL10 family. As to quaternary structure, part of the ribosomal stalk of the 50S ribosomal subunit. The N-terminus interacts with L11 and the large rRNA to form the base of the stalk. The C-terminus forms an elongated spine to which L12 dimers bind in a sequential fashion forming a multimeric L10(L12)X complex.

Functionally, forms part of the ribosomal stalk, playing a central role in the interaction of the ribosome with GTP-bound translation factors. This chain is Large ribosomal subunit protein uL10, found in Burkholderia lata (strain ATCC 17760 / DSM 23089 / LMG 22485 / NCIMB 9086 / R18194 / 383).